The following is a 287-amino-acid chain: Nucleotide-binding protein Sfri_3380 (287 aa).

An ATP-binding site is contributed by 8–15 (GRSGSGKS). 56–59 (DVRN) provides a ligand contact to GTP.

The protein belongs to the RapZ-like family.

Functionally, displays ATPase and GTPase activities. The chain is Nucleotide-binding protein Sfri_3380 from Shewanella frigidimarina (strain NCIMB 400).